Consider the following 296-residue polypeptide: Phosphatidylserine decarboxylase proenzyme (296 aa).

Active-site charge relay system; for autoendoproteolytic cleavage activity residues include Asp100, His157, and Ser263. Residue Ser263 is the Schiff-base intermediate with substrate; via pyruvic acid; for decarboxylase activity of the active site. Pyruvic acid (Ser); by autocatalysis is present on Ser263.

It belongs to the phosphatidylserine decarboxylase family. PSD-B subfamily. Prokaryotic type I sub-subfamily. As to quaternary structure, heterodimer of a large membrane-associated beta subunit and a small pyruvoyl-containing alpha subunit. Pyruvate is required as a cofactor. In terms of processing, is synthesized initially as an inactive proenzyme. Formation of the active enzyme involves a self-maturation process in which the active site pyruvoyl group is generated from an internal serine residue via an autocatalytic post-translational modification. Two non-identical subunits are generated from the proenzyme in this reaction, and the pyruvate is formed at the N-terminus of the alpha chain, which is derived from the carboxyl end of the proenzyme. The autoendoproteolytic cleavage occurs by a canonical serine protease mechanism, in which the side chain hydroxyl group of the serine supplies its oxygen atom to form the C-terminus of the beta chain, while the remainder of the serine residue undergoes an oxidative deamination to produce ammonia and the pyruvoyl prosthetic group on the alpha chain. During this reaction, the Ser that is part of the protease active site of the proenzyme becomes the pyruvoyl prosthetic group, which constitutes an essential element of the active site of the mature decarboxylase.

The protein resides in the cell membrane. It carries out the reaction a 1,2-diacyl-sn-glycero-3-phospho-L-serine + H(+) = a 1,2-diacyl-sn-glycero-3-phosphoethanolamine + CO2. It participates in phospholipid metabolism; phosphatidylethanolamine biosynthesis; phosphatidylethanolamine from CDP-diacylglycerol: step 2/2. Its function is as follows. Catalyzes the formation of phosphatidylethanolamine (PtdEtn) from phosphatidylserine (PtdSer). This Actinobacillus pleuropneumoniae serotype 7 (strain AP76) protein is Phosphatidylserine decarboxylase proenzyme.